Consider the following 213-residue polypeptide: Adenylate kinase (213 aa).

10–15 (GSGKGT) is a binding site for ATP. Positions 30–59 (STGDLFRTNIENDTPLGKEIKQIVENGQLV) are NMP. AMP contacts are provided by residues threonine 31, arginine 36, 57–59 (QLV), 85–88 (GFPR), and glutamine 92. The tract at residues 121 to 158 (GRRICQSCCKIFNIYTLPTKEKEICDFCQGILYQRKDD) is LID. Arginine 122 lines the ATP pocket. Zn(2+)-binding residues include cysteine 125 and cysteine 128. 131 to 132 (IF) lines the ATP pocket. 2 residues coordinate Zn(2+): cysteine 145 and cysteine 148. AMP contacts are provided by arginine 155 and arginine 166. ATP is bound at residue lysine 194.

This sequence belongs to the adenylate kinase family. Monomer.

It localises to the cytoplasm. It carries out the reaction AMP + ATP = 2 ADP. The protein operates within purine metabolism; AMP biosynthesis via salvage pathway; AMP from ADP: step 1/1. In terms of biological role, catalyzes the reversible transfer of the terminal phosphate group between ATP and AMP. Plays an important role in cellular energy homeostasis and in adenine nucleotide metabolism. The protein is Adenylate kinase of Borrelia duttonii (strain Ly).